The sequence spans 354 residues: Homer protein homolog 2 (354 aa).

The WH1 domain occupies 1–110 (MGEQPIFTTR…EKFQEVKEAA (110 aa)). Residues 92–122 (SEQQLTKFAEKFQEVKEAAKIAKDKTQEKIE) are a coiled coil. Over residues 112 to 122 (IAKDKTQEKIE) the composition is skewed to basic and acidic residues. The tract at residues 112-166 (IAKDKTQEKIETSSNHSQESGRETPSSTQASSVNGTDDEKASHAGPANTHLKSEN) is disordered. Positions 123–146 (TSSNHSQESGRETPSSTQASSVNG) are enriched in polar residues. A coiled-coil region spans residues 160-329 (THLKSENDKL…RHLKVELKSF (170 aa)).

This sequence belongs to the Homer family. In terms of assembly, forms coiled-coil structures that mediate homo- and heteromultimerization. Interacts with NFATC2; interaction is reduced by AKT activation. Interacts with NFATC1 and NFATC4. Interacts with DAGLA (via PPXXF motif); this interaction is required for the cell membrane localization of DAGLA.

Its subcellular location is the cytoplasm. The protein localises to the cell membrane. It localises to the postsynaptic density. It is found in the synapse. The protein resides in the cell projection. Its subcellular location is the stereocilium. In terms of biological role, postsynaptic density scaffolding protein. Binds and cross-links cytoplasmic regions of GRM1, GRM5, ITPR1, DNM3, RYR1, RYR2, SHANK1 and SHANK3. By physically linking GRM1 and GRM5 with ER-associated ITPR1 receptors, it aids the coupling of surface receptors to intracellular calcium release. May also couple GRM1 to PI3 kinase through its interaction with AGAP2. Isoforms can be differently regulated and may play an important role in maintaining the plasticity at glutamatergic synapses. Required for normal hearing. Negatively regulates T cell activation by inhibiting the calcineurin-NFAT pathway. Acts by competing with calcineurin/PPP3CA for NFAT protein binding, hence preventing NFAT activation by PPP3CA. The sequence is that of Homer protein homolog 2 from Homo sapiens (Human).